The chain runs to 162 residues: UPF0178 protein Rsph17029_2512 (162 aa).

It belongs to the UPF0178 family.

This Cereibacter sphaeroides (strain ATCC 17029 / ATH 2.4.9) (Rhodobacter sphaeroides) protein is UPF0178 protein Rsph17029_2512.